The following is a 324-amino-acid chain: Probable UDP-sugar transporter protein SLC35A4 (324 aa).

Over 1–18 (MSVEDGGMPGLARPKQAR) the chain is Cytoplasmic. Residues 19–39 (WTLMLFLSTAMYGAHAPFLAL) form a helical membrane-spanning segment. The Lumenal segment spans residues 40–52 (CHVDGRVPFRPSS). The helical transmembrane segment at 53–73 (AVLLTELTKLLLCAFSLLVGW) threads the bilayer. At 74-85 (QTWPQGTPPWRQ) the chain is on the cytoplasmic side. Residues 86–106 (AAPFALSALLYGANNNLVIYL) traverse the membrane as a helical segment. Over 107–142 (QRYMDPSTYQVLSNLKIGSTALLYCLCLGHRLSARQ) the chain is Lumenal. The chain crosses the membrane as a helical span at residues 143–163 (GLALLLLMAAGACYASGGFQE). The Cytoplasmic segment spans residues 164-180 (PGNTLPGPRSAAGARPM). Residues 181–201 (PLHITPLGLLLLILYCLISGL) form a helical membrane-spanning segment. Residues 202 to 214 (SSVYTELIMKRQR) lie on the Lumenal side of the membrane. A helical membrane pass occupies residues 215–235 (LPLALQNLFLYTFGVILNLGL). Residues 236-248 (YAGSGPGPGFLEG) lie on the Cytoplasmic side of the membrane. The chain crosses the membrane as a helical span at residues 249–271 (FSGWAVLVVLNQAVNGLLMSAVM). Residues 272 to 279 (KHGSSITR) lie on the Lumenal side of the membrane. A helical transmembrane segment spans residues 280–300 (LFIVSCSLVVNAVLSAVLLQL). At 301–324 (QLTATFFLAALLIGLAVCLYYGSP) the chain is on the cytoplasmic side.

It belongs to the nucleotide-sugar transporter family. SLC35A subfamily. In terms of assembly, found in a complex with SLC35A2 and SLC35A3. In terms of tissue distribution, expressed in the kidney, lung, testis, and prostate. Expressed in the brain by sets of neurons, such as the pyramidal cells of the cortex, the Purkinje cells of the cerebellum, and the motoneurons of the brainstem.

The protein localises to the golgi apparatus membrane. The enzyme catalyses CDP-L-ribitol(in) + CDP(out) = CDP-L-ribitol(out) + CDP(in). Functionally, mediates the transport of CDP-ribitol. Does not exhibit CMP-sialic acid, UDP-galactose and UDP-N-acetylglucosamine transport activity. The sequence is that of Probable UDP-sugar transporter protein SLC35A4 from Rattus norvegicus (Rat).